The chain runs to 562 residues: Probable tRNA (uracil-O(2)-)-methyltransferase (562 aa).

A disordered region spans residues 520–546 (VSRRQQTNPKKQEATNRPKQPCWMSLN). The segment at 535–562 (NRPKQPCWMSLNHPDGCPLGPESCRYLH) adopts a C3H1-type zinc-finger fold.

The protein belongs to the TRM44 family.

It localises to the cytoplasm. The enzyme catalyses uridine(44) in tRNA(Ser) + S-adenosyl-L-methionine = 2'-O-methyluridine(44) in tRNA(Ser) + S-adenosyl-L-homocysteine + H(+). In terms of biological role, probable adenosyl-L-methionine (AdoMet)-dependent tRNA (uracil-O(2)-)-methyltransferase. The chain is Probable tRNA (uracil-O(2)-)-methyltransferase from Caenorhabditis briggsae.